Consider the following 267-residue polypeptide: Putative F-box protein At5g38810 (267 aa).

An F-box domain is found at 4-53 (RKTFDSIPDDLFVEIALRLSSKSIARCRCVSKLWASILYRQDFTELFITK).

The protein is Putative F-box protein At5g38810 of Arabidopsis thaliana (Mouse-ear cress).